The sequence spans 78 residues: uncharacterized protein (78 aa).

Functionally, this protein may be involved in virus assembly. Essential for virus function. This is an uncharacterized protein from Sulfolobus spindle-shape virus 1 (SSV1).